We begin with the raw amino-acid sequence, 580 residues long: UPF0329 protein ECU06_0080 (580 aa).

The span at 308-330 (RQKRREREMEKSMKELLRDEEKA) shows a compositional bias: basic and acidic residues. The segment at 308 to 384 (RQKRREREME…KTGKKSKGGR (77 aa)) is disordered. Over residues 331-340 (KSKKGRKKKS) the composition is skewed to basic residues. A compositionally biased stretch (acidic residues) spans 351–363 (SETEEVEASEEME). Positions 372–384 (ARRKTGKKSKGGR) are enriched in basic residues.

This sequence belongs to the UPF0329 family.

This is UPF0329 protein ECU06_0080 from Encephalitozoon cuniculi (strain GB-M1) (Microsporidian parasite).